The chain runs to 426 residues: Glutamyl-tRNA reductase (426 aa).

Substrate is bound by residues 49–52 (TCNR), Ser-101, 106–108 (EPQ), and Gln-112. Cys-50 serves as the catalytic Nucleophile. 181 to 186 (GAGETI) provides a ligand contact to NADP(+). The tract at residues 405–426 (RLFPEKPGYQHPPHSYPDREDR) is disordered.

The protein belongs to the glutamyl-tRNA reductase family. Homodimer.

The catalysed reaction is (S)-4-amino-5-oxopentanoate + tRNA(Glu) + NADP(+) = L-glutamyl-tRNA(Glu) + NADPH + H(+). Its pathway is porphyrin-containing compound metabolism; protoporphyrin-IX biosynthesis; 5-aminolevulinate from L-glutamyl-tRNA(Glu): step 1/2. Functionally, catalyzes the NADPH-dependent reduction of glutamyl-tRNA(Glu) to glutamate 1-semialdehyde (GSA). The polypeptide is Glutamyl-tRNA reductase (Xanthomonas axonopodis pv. citri (strain 306)).